The following is a 525-amino-acid chain: tRNA-2-methylthio-N(6)-dimethylallyladenosine synthase (525 aa).

In terms of domain architecture, MTTase N-terminal spans arginine 14–histidine 130. The [4Fe-4S] cluster site is built by cysteine 23, cysteine 59, cysteine 93, cysteine 167, cysteine 171, and cysteine 174. The 248-residue stretch at arginine 153–glutamate 400 folds into the Radical SAM core domain. A TRAM domain is found at glutamine 403–leucine 482.

This sequence belongs to the methylthiotransferase family. MiaB subfamily. Monomer. [4Fe-4S] cluster is required as a cofactor.

It is found in the cytoplasm. The catalysed reaction is N(6)-dimethylallyladenosine(37) in tRNA + (sulfur carrier)-SH + AH2 + 2 S-adenosyl-L-methionine = 2-methylsulfanyl-N(6)-dimethylallyladenosine(37) in tRNA + (sulfur carrier)-H + 5'-deoxyadenosine + L-methionine + A + S-adenosyl-L-homocysteine + 2 H(+). In terms of biological role, catalyzes the methylthiolation of N6-(dimethylallyl)adenosine (i(6)A), leading to the formation of 2-methylthio-N6-(dimethylallyl)adenosine (ms(2)i(6)A) at position 37 in tRNAs that read codons beginning with uridine. The protein is tRNA-2-methylthio-N(6)-dimethylallyladenosine synthase of Mycobacterium sp. (strain MCS).